The sequence spans 113 residues: Large ribosomal subunit protein bL19 (113 aa).

Belongs to the bacterial ribosomal protein bL19 family.

In terms of biological role, this protein is located at the 30S-50S ribosomal subunit interface and may play a role in the structure and function of the aminoacyl-tRNA binding site. This Natranaerobius thermophilus (strain ATCC BAA-1301 / DSM 18059 / JW/NM-WN-LF) protein is Large ribosomal subunit protein bL19.